Consider the following 322-residue polypeptide: ADP,ATP carrier protein (322 aa).

Solcar repeat units follow at residues 25 to 118 (STFF…FKKM), 130 to 222 (KWFA…LKPV), and 230 to 316 (GNFL…VQLL). 5 helical membrane-spanning segments follow: residues 27–54 (FFFD…VKLL), 95–119 (TANV…KKMF), 128–148 (YAKW…ASLL), 198–219 (FGPS…YDTL), and 233–253 (LASF…SYPL). Residues R100 and K112 each contribute to the ADP site. R257 serves as a coordination point for ADP. Residues 257–262 (RRRMMM) form an important for transport activity region. Positions 257–262 (RRRMMM) match the Nucleotide carrier signature motif motif. A helical membrane pass occupies residues 293–313 (AGANILRGVAGAGVLSIYDQV).

Belongs to the mitochondrial carrier (TC 2.A.29) family. In terms of assembly, monomer.

The protein resides in the mitochondrion inner membrane. The catalysed reaction is ADP(in) + ATP(out) = ADP(out) + ATP(in). The matrix-open state (m-state) is inhibited by the membrane-permeable bongkrekic acid (BKA). The cytoplasmic-open state (c-state) is inhibited by the membrane-impermeable toxic inhibitor carboxyatractyloside (CATR). Its function is as follows. ADP:ATP antiporter that mediates import of ADP into the mitochondrial matrix for ATP synthesis, and export of ATP out to fuel the cell. Cycles between the cytoplasmic-open state (c-state) and the matrix-open state (m-state): operates by the alternating access mechanism with a single substrate-binding site intermittently exposed to either the cytosolic (c-state) or matrix (m-state) side of the inner mitochondrial membrane. The chain is ADP,ATP carrier protein (anc1) from Schizosaccharomyces pombe (strain 972 / ATCC 24843) (Fission yeast).